The sequence spans 346 residues: Small ribosomal subunit biogenesis GTPase RsgA 2 (346 aa).

The region spanning 93-248 (EEQLIAANFD…VIDTPGMREF (156 aa)) is the CP-type G domain. GTP is bound by residues 138–141 (TKAD) and 190–198 (GSSGVGKSS). The Zn(2+) site is built by Cys-271, Cys-276, His-278, and Cys-284.

This sequence belongs to the TRAFAC class YlqF/YawG GTPase family. RsgA subfamily. As to quaternary structure, monomer. Associates with 30S ribosomal subunit, binds 16S rRNA. It depends on Zn(2+) as a cofactor.

The protein localises to the cytoplasm. Functionally, one of several proteins that assist in the late maturation steps of the functional core of the 30S ribosomal subunit. Helps release RbfA from mature subunits. May play a role in the assembly of ribosomal proteins into the subunit. Circularly permuted GTPase that catalyzes slow GTP hydrolysis, GTPase activity is stimulated by the 30S ribosomal subunit. The chain is Small ribosomal subunit biogenesis GTPase RsgA 2 from Listeria monocytogenes serotype 4b (strain F2365).